The primary structure comprises 278 residues: Malonyl-[acyl-carrier protein] O-methyltransferase (278 aa).

Belongs to the methyltransferase superfamily.

The catalysed reaction is malonyl-[ACP] + S-adenosyl-L-methionine = malonyl-[ACP] methyl ester + S-adenosyl-L-homocysteine. It participates in cofactor biosynthesis; biotin biosynthesis. Functionally, converts the free carboxyl group of a malonyl-thioester to its methyl ester by transfer of a methyl group from S-adenosyl-L-methionine (SAM). It allows to synthesize pimeloyl-ACP via the fatty acid synthetic pathway. The polypeptide is Malonyl-[acyl-carrier protein] O-methyltransferase (Brevibacillus brevis (strain 47 / JCM 6285 / NBRC 100599)).